We begin with the raw amino-acid sequence, 95 residues long: Large ribosomal subunit protein bL27 (95 aa).

Residues 1-9 constitute a propeptide that is removed on maturation; sequence MLKMNLQFF.

Belongs to the bacterial ribosomal protein bL27 family. Post-translationally, the N-terminus is cleaved by ribosomal processing cysteine protease Prp.

This chain is Large ribosomal subunit protein bL27, found in Lachnoclostridium phytofermentans (strain ATCC 700394 / DSM 18823 / ISDg) (Clostridium phytofermentans).